Consider the following 65-residue polypeptide: Large ribosomal subunit protein bL35 (65 aa).

The protein belongs to the bacterial ribosomal protein bL35 family.

This is Large ribosomal subunit protein bL35 from Clostridium kluyveri (strain NBRC 12016).